The sequence spans 121 residues: Flagellar protein FliT (121 aa).

The interval 1–50 is required for homodimerization; it reads MNNAPHLYFAWQQLVEKSQLMLRLATEEQWDELIASEMAYVNAVQEIAHL. Positions 60–98 are fliD binding; sequence MQEQLRPMLHLILDNESKVKQLLQIRMDELAKLVGQSSV.

This sequence belongs to the FliT family. As to quaternary structure, homodimer. Interacts with FliD and FlhC.

The protein localises to the cytoplasm. Its subcellular location is the cytosol. Its function is as follows. Dual-function protein that regulates the transcription of class 2 flagellar operons and that also acts as an export chaperone for the filament-capping protein FliD. As a transcriptional regulator, acts as an anti-FlhDC factor; it directly binds FlhC, thus inhibiting the binding of the FlhC/FlhD complex to class 2 promoters, resulting in decreased expression of class 2 flagellar operons. As a chaperone, effects FliD transition to the membrane by preventing its premature polymerization, and by directing it to the export apparatus. The chain is Flagellar protein FliT from Shigella flexneri serotype 5b (strain 8401).